Consider the following 445-residue polypeptide: Exodeoxyribonuclease 7 large subunit (445 aa).

It belongs to the XseA family. As to quaternary structure, heterooligomer composed of large and small subunits.

Its subcellular location is the cytoplasm. The catalysed reaction is Exonucleolytic cleavage in either 5'- to 3'- or 3'- to 5'-direction to yield nucleoside 5'-phosphates.. Its function is as follows. Bidirectionally degrades single-stranded DNA into large acid-insoluble oligonucleotides, which are then degraded further into small acid-soluble oligonucleotides. The polypeptide is Exodeoxyribonuclease 7 large subunit (Staphylococcus aureus (strain JH1)).